A 663-amino-acid chain; its full sequence is UvrABC system protein B (663 aa).

The Helicase ATP-binding domain occupies 26–414 (DGLESGLAKQ…DNVAEQVVRP (389 aa)). 39–46 (GVTGSGKT) contributes to the ATP binding site. The Beta-hairpin motif lies at 92–115 (YYDYYQPEAYVPASDTFIEKDASI). Positions 430–596 (QVDDLMSEIR…GINKSVEDIL (167 aa)) constitute a Helicase C-terminal domain. The UVR domain occupies 624–659 (AKQINALEKQMYAHAQNMEFELAAKIRDEYLLLKEQ).

This sequence belongs to the UvrB family. In terms of assembly, forms a heterotetramer with UvrA during the search for lesions. Interacts with UvrC in an incision complex.

Its subcellular location is the cytoplasm. The UvrABC repair system catalyzes the recognition and processing of DNA lesions. A damage recognition complex composed of 2 UvrA and 2 UvrB subunits scans DNA for abnormalities. Upon binding of the UvrA(2)B(2) complex to a putative damaged site, the DNA wraps around one UvrB monomer. DNA wrap is dependent on ATP binding by UvrB and probably causes local melting of the DNA helix, facilitating insertion of UvrB beta-hairpin between the DNA strands. Then UvrB probes one DNA strand for the presence of a lesion. If a lesion is found the UvrA subunits dissociate and the UvrB-DNA preincision complex is formed. This complex is subsequently bound by UvrC and the second UvrB is released. If no lesion is found, the DNA wraps around the other UvrB subunit that will check the other stand for damage. The polypeptide is UvrABC system protein B (Legionella pneumophila (strain Lens)).